The sequence spans 120 residues: PE family protein PE10 (120 aa).

A disordered region spans residues 29-59; sequence GQVTGNGGSGNSGTSAAAANPNSDNTASIAD. A compositionally biased stretch (low complexity) spans 40 to 51; sequence SGTSAAAANPNS.

It belongs to the mycobacterial PE family. Forms a complex with PE9. The complex interacts with human TLR4.

Its subcellular location is the secreted. It localises to the cell wall. Its function is as follows. Together with PE9, induces macrophage apoptosis through human Toll-like receptor 4 (TLR4) signaling pathway. Interaction with TLR4 leads to increased levels of phospho-IRF-3, increase in the transcript levels of IFN-beta and pro-apoptotic genes, up-regulation of IL-10, down-regulation of IL-1b and enhanced levels of macrophage apoptosis. This chain is PE family protein PE10, found in Mycobacterium tuberculosis (strain ATCC 25618 / H37Rv).